A 223-amino-acid polypeptide reads, in one-letter code: DNA mismatch repair protein MutH (223 aa).

It belongs to the MutH family.

The protein resides in the cytoplasm. Its function is as follows. Sequence-specific endonuclease that cleaves unmethylated GATC sequences. It is involved in DNA mismatch repair. This is DNA mismatch repair protein MutH from Shewanella baltica (strain OS185).